The following is a 665-amino-acid chain: Dystrophia myotonica WD repeat-containing protein (665 aa).

Positions 1 to 11 are enriched in gly residues; sequence MAAGGAEGGPG. 2 disordered regions span residues 1-91 and 100-119; these read MAAG…PALP and LGDP…LGAG. At Ala2 the chain carries N-acetylalanine. Residues 52 to 64 are compositionally biased toward pro residues; that stretch reads PAPPQPTQPPPGP. Positions 65–76 are enriched in low complexity; the sequence is AAASGPGAAGPA. Pro residues predominate over residues 77 to 89; it reads SSPPPAGPGPGPA. WD repeat units lie at residues 208-248, 279-318, 321-360, and 363-445; these read IDKT…TSTP, VGEG…LRGL, SYFG…VVAR, and GHKS…LSPH. Disordered regions lie at residues 380–413, 446–506, 524–564, and 628–665; these read AEEA…VSPL, PSLA…SMEP, RDRG…RSRL, and DEET…GTVV. The segment covering 450 to 491 has biased composition (low complexity); that stretch reads RTRTLPGTPGATPPASGSSRAGETGAGPLPRSLSRSNSLPHP. Phosphoserine is present on Ser487. Omega-N-methylarginine is present on Arg543. Residues 592-629 form a WD 5 repeat; the sequence is IAQERLTVLLFLEDCIITACQEGLICTWARPGKAFTDE. A compositionally biased stretch (polar residues) spans 634-646; the sequence is QAGQASWPRSPSK. Residues 653 to 665 are compositionally biased toward low complexity; the sequence is SSQPGSSPSGTVV.

As to quaternary structure, component of the USP12/DMWD/WDR48 deubiquitinating complex. Interacts with USP12; promotes its enzymatic activity. Interacts with USP46. In terms of tissue distribution, widely expressed in brain where it localizes to the olfactory bulb, forebrain, thalamus, hippocampus, cerebellum, cortex and hypothalamus (at protein level). Expression seems to be particularly strong in areas of high synaptic density such as the glomerular layer of the olfactory bulb, and mossy fiber terminal fields of the hippocampus (at protein level). Expressed in retina, with strongest expression in the external and internal plexiform layers (at protein level). Strongly expressed in brain and testis. Also detected at lower levels in heart, kidney, liver, lung, ovary, uterus, bladder and skeletal muscle. In testis, expression seems to be restricted to secondary spermatocytes.

The protein localises to the cytoplasm. It localises to the nucleus. It is found in the perikaryon. The protein resides in the cell projection. Its subcellular location is the dendrite. Functionally, regulator of the deubiquitinating USP12/DMWD/WDR48 complex. Functions as a cofactor that promotes USP12 enzymatic activity. This is Dystrophia myotonica WD repeat-containing protein (Dmwd) from Mus musculus (Mouse).